The following is a 315-amino-acid chain: Tetraacyldisaccharide 4'-kinase (315 aa).

52 to 59 (TVGGTGKT) is an ATP binding site.

The protein belongs to the LpxK family.

It carries out the reaction a lipid A disaccharide + ATP = a lipid IVA + ADP + H(+). It functions in the pathway glycolipid biosynthesis; lipid IV(A) biosynthesis; lipid IV(A) from (3R)-3-hydroxytetradecanoyl-[acyl-carrier-protein] and UDP-N-acetyl-alpha-D-glucosamine: step 6/6. Transfers the gamma-phosphate of ATP to the 4'-position of a tetraacyldisaccharide 1-phosphate intermediate (termed DS-1-P) to form tetraacyldisaccharide 1,4'-bis-phosphate (lipid IVA). In Ruthia magnifica subsp. Calyptogena magnifica, this protein is Tetraacyldisaccharide 4'-kinase.